The sequence spans 253 residues: 5'-nucleotidase SurE (253 aa).

The a divalent metal cation site is built by D8, D9, S39, and N91.

It belongs to the SurE nucleotidase family. A divalent metal cation serves as cofactor.

It localises to the cytoplasm. It carries out the reaction a ribonucleoside 5'-phosphate + H2O = a ribonucleoside + phosphate. Functionally, nucleotidase that shows phosphatase activity on nucleoside 5'-monophosphates. The protein is 5'-nucleotidase SurE of Leptothrix cholodnii (strain ATCC 51168 / LMG 8142 / SP-6) (Leptothrix discophora (strain SP-6)).